Consider the following 408-residue polypeptide: Peptidase T (408 aa).

Zn(2+) is bound at residue His-78. The active site involves Asp-80. Asp-140 is a binding site for Zn(2+). Glu-173 (proton acceptor) is an active-site residue. Positions 174, 196, and 379 each coordinate Zn(2+).

It belongs to the peptidase M20B family. Zn(2+) serves as cofactor.

It is found in the cytoplasm. The catalysed reaction is Release of the N-terminal residue from a tripeptide.. Its function is as follows. Cleaves the N-terminal amino acid of tripeptides. The sequence is that of Peptidase T from Escherichia coli (strain UTI89 / UPEC).